Reading from the N-terminus, the 353-residue chain is Ferrochelatase (353 aa).

Over residues 1 to 13 (MTLERTGRDEEKA) the composition is skewed to basic and acidic residues. Positions 1–23 (MTLERTGRDEEKALTQPPSGHSS) are disordered. Fe cation is bound by residues His223 and Glu304.

The protein belongs to the ferrochelatase family.

The protein localises to the cytoplasm. It carries out the reaction heme b + 2 H(+) = protoporphyrin IX + Fe(2+). The protein operates within porphyrin-containing compound metabolism; protoheme biosynthesis; protoheme from protoporphyrin-IX: step 1/1. Catalyzes the ferrous insertion into protoporphyrin IX. This chain is Ferrochelatase, found in Chelativorans sp. (strain BNC1).